We begin with the raw amino-acid sequence, 23 residues long: M-myrmeciitoxin-Mp2b (23 aa).

A Glutamine amide modification is found at Gln-23.

It belongs to the formicidae venom precursor-01 superfamily. Ant pilosulin family. As to quaternary structure, heterodimer with M-MIITX-Mp2a (pilosulin-3a) (AC Q26464); disulfide-linked. Only heterodimers (and not monomers) have been identified in the venom. In terms of tissue distribution, expressed by the venom gland.

Its subcellular location is the secreted. Its function is as follows. Heterodimer protein that may serve both defensive (pain-inducing) and predatory (insecticidal) roles. Has membrane-disrupting activity and shows induction of non-specific calcium influx into cells,. Shows broad-spectrum activity against a diverse range of bacteria, and cell lines, as well as hemolytic activity (EC(50)=2.18 uM). In vivo, shows moderate insecticidal activity against D.melanogaster and potent anthelmintic activity against the veterinary nematode H.contortus. In addition, intraplantar injection into mice induces nocifensive behavior and mechanical allodynia. The sequence is that of M-myrmeciitoxin-Mp2b from Myrmecia pilosula (Jack jumper ant).